Consider the following 346-residue polypeptide: Selenocysteine Se-methyltransferase (346 aa).

Residues 13 to 330 (SMKELLKETG…TTIRAIHKRL (318 aa)) form the Hcy-binding domain. Residues cysteine 248, cysteine 315, and cysteine 316 each coordinate Zn(2+).

Zn(2+) serves as cofactor. In terms of tissue distribution, expressed in roots, young leaves and florets, but not detected in plants not exposed to selenium.

The enzyme catalyses S-methyl-L-methionine + L-selenocysteine = Se-methyl-L-selenocysteine + L-methionine + H(+). Inhibited by L-methionine. Its function is as follows. Catalyzes the methylation of DL- and L-selenocysteine with S-methylmethionine as donor. Also methylates DL-homocysteine, DL- and L-cysteine in vitro. May be involved in selenium detoxification. The polypeptide is Selenocysteine Se-methyltransferase (SMT) (Brassica oleracea var. italica (Broccoli)).